Here is a 312-residue protein sequence, read N- to C-terminus: Ornithine carbamoyltransferase (312 aa).

Carbamoyl phosphate is bound by residues 59–62 (STRT), Q86, R110, and 137–140 (HPCQ). Residues N167, D231, and 235-236 (SM) contribute to the L-ornithine site. C271 and R299 together coordinate carbamoyl phosphate.

The protein belongs to the aspartate/ornithine carbamoyltransferase superfamily. OTCase family.

Its subcellular location is the cytoplasm. It catalyses the reaction carbamoyl phosphate + L-ornithine = L-citrulline + phosphate + H(+). The protein operates within amino-acid biosynthesis; L-arginine biosynthesis; L-arginine from L-ornithine and carbamoyl phosphate: step 1/3. Reversibly catalyzes the transfer of the carbamoyl group from carbamoyl phosphate (CP) to the N(epsilon) atom of ornithine (ORN) to produce L-citrulline. In Methanopyrus kandleri (strain AV19 / DSM 6324 / JCM 9639 / NBRC 100938), this protein is Ornithine carbamoyltransferase.